Reading from the N-terminus, the 293-residue chain is Ribosomal protein L11 methyltransferase (293 aa).

The S-adenosyl-L-methionine site is built by threonine 145, glycine 166, aspartate 188, and asparagine 230.

This sequence belongs to the methyltransferase superfamily. PrmA family.

Its subcellular location is the cytoplasm. The catalysed reaction is L-lysyl-[protein] + 3 S-adenosyl-L-methionine = N(6),N(6),N(6)-trimethyl-L-lysyl-[protein] + 3 S-adenosyl-L-homocysteine + 3 H(+). Functionally, methylates ribosomal protein L11. This is Ribosomal protein L11 methyltransferase from Shewanella denitrificans (strain OS217 / ATCC BAA-1090 / DSM 15013).